The chain runs to 75 residues: U6-lycotoxin-Ls1c (75 aa).

Residues 1–21 (MKLLLFTALVLVVISLIEVEA) form the signal peptide. The propeptide occupies 22-25 (ENER). 4 disulfide bridges follow: Cys27-Cys42, Cys34-Cys47, Cys41-Cys65, and Cys49-Cys63.

Belongs to the neurotoxin 19 (CSTX) family. 06 (U6-Lctx) subfamily. Expressed by the venom gland.

The protein localises to the secreted. The sequence is that of U6-lycotoxin-Ls1c from Lycosa singoriensis (Wolf spider).